The primary structure comprises 185 residues: Peptidyl-tRNA hydrolase (185 aa).

Y14 is a binding site for tRNA. The active-site Proton acceptor is H19. The tRNA site is built by Y64, N66, and N112.

This sequence belongs to the PTH family. As to quaternary structure, monomer.

It localises to the cytoplasm. It catalyses the reaction an N-acyl-L-alpha-aminoacyl-tRNA + H2O = an N-acyl-L-amino acid + a tRNA + H(+). Functionally, hydrolyzes ribosome-free peptidyl-tRNAs (with 1 or more amino acids incorporated), which drop off the ribosome during protein synthesis, or as a result of ribosome stalling. Its function is as follows. Catalyzes the release of premature peptidyl moieties from peptidyl-tRNA molecules trapped in stalled 50S ribosomal subunits, and thus maintains levels of free tRNAs and 50S ribosomes. The sequence is that of Peptidyl-tRNA hydrolase from Lactobacillus delbrueckii subsp. bulgaricus (strain ATCC 11842 / DSM 20081 / BCRC 10696 / JCM 1002 / NBRC 13953 / NCIMB 11778 / NCTC 12712 / WDCM 00102 / Lb 14).